The sequence spans 413 residues: S-adenosylmethionine synthase (413 aa).

Position 15 (His-15) interacts with ATP. Asp-17 serves as a coordination point for Mg(2+). Glu-43 contacts K(+). Positions 56 and 100 each coordinate L-methionine. Residues 100–110 are flexible loop; the sequence is QSPDISQGVNE. Residues 171–173, 248–249, Asp-257, 263–264, Ala-280, and Lys-284 contribute to the ATP site; these read DGK, KF, and RK. Asp-257 provides a ligand contact to L-methionine. L-methionine is bound at residue Lys-288.

Belongs to the AdoMet synthase family. In terms of assembly, homotetramer; dimer of dimers. The cofactor is Mg(2+). Requires K(+) as cofactor.

It localises to the cytoplasm. It carries out the reaction L-methionine + ATP + H2O = S-adenosyl-L-methionine + phosphate + diphosphate. The protein operates within amino-acid biosynthesis; S-adenosyl-L-methionine biosynthesis; S-adenosyl-L-methionine from L-methionine: step 1/1. In terms of biological role, catalyzes the formation of S-adenosylmethionine (AdoMet) from methionine and ATP. The overall synthetic reaction is composed of two sequential steps, AdoMet formation and the subsequent tripolyphosphate hydrolysis which occurs prior to release of AdoMet from the enzyme. The sequence is that of S-adenosylmethionine synthase from Prochlorococcus marinus (strain MIT 9515).